A 478-amino-acid chain; its full sequence is Cytochrome P450 family 716 subfamily AD polypeptide 4 (478 aa).

The chain crosses the membrane as a helical span at residues 1–21 (MELFLPSVLLILTVFCFYYLF). Cysteine 425 contributes to the heme binding site.

Belongs to the cytochrome P450 family. Heme serves as cofactor. In terms of tissue distribution, mainly expressed in petioles and, to a lower extent, in roots.

The protein resides in the membrane. The enzyme catalyses (1S,3bR,4R,5aR,9aR,9bR,11aS)-1-[(4R)-5-[(2S)-3,3-dimethyloxiran-2-yl]-1,4-dihydroxybutan-2-yl]-3b,6,6,9a,11a-pentamethyl-7-oxo-1H,2H,3bH,4H,5H,5aH,6H,7H,9aH,9bH,10H,11H,11aH-cyclopenta[a]phenanthren-4-yl acetate + reduced [NADPH--hemoprotein reductase] + O2 = (1S,3bR,4R,5aR,9aR,9bR,11aS)-1-(1-hydroxy-4-oxobutan-2-yl)-3b,6,6,9a,11a-pentamethyl-7-oxo-1H,2H,3bH,4H,5H,5aH,6H,7H,9aH,9bH,10H,11H,11aH-cyclopenta[a]phenanthren-4-yl acetate + 2-methylpropanoate + oxidized [NADPH--hemoprotein reductase] + H2O + 2 H(+). It participates in secondary metabolite biosynthesis; terpenoid biosynthesis. Its function is as follows. Monooxygenase involved in the biosynthesis of limonoids triterpene natural products such as azadirachtin, an antifeedant widely used as bioinsecticide, and possessing many medicinal applications including anti-tumoral, anti-malarial, anti-rheumatic, antibacterial, anti-inflammatory, anti-pyretic and diuretic effects. Catalyzes the formation of (1S,3bR,4R,5aR,9aR,9bR,11aS)-1-(1-hydroxy-4-oxobutan-2-yl)-3b,6,6,9a,11a-pentamethyl-7-oxo-1H,2H,3bH,4H,5H,5aH,6H,7H,9aH,9bH,10H,11H,11aH-cyclopenta[a]phenanthren-4-yl acetate. In Melia azedarach (Chinaberry tree), this protein is Cytochrome P450 family 716 subfamily AD polypeptide 4.